Consider the following 170-residue polypeptide: Adenine phosphoribosyltransferase (170 aa).

Belongs to the purine/pyrimidine phosphoribosyltransferase family. Homodimer.

The protein localises to the cytoplasm. It catalyses the reaction AMP + diphosphate = 5-phospho-alpha-D-ribose 1-diphosphate + adenine. The protein operates within purine metabolism; AMP biosynthesis via salvage pathway; AMP from adenine: step 1/1. In terms of biological role, catalyzes a salvage reaction resulting in the formation of AMP, that is energically less costly than de novo synthesis. This chain is Adenine phosphoribosyltransferase, found in Clostridioides difficile (strain 630) (Peptoclostridium difficile).